The chain runs to 1941 residues: Xin actin-binding repeat-containing protein 1 (1941 aa).

The segment at 1–41 (MAEPQKSSKVAIKKMEDDLPPPPIPDSIQVIAPASQDPNPL) is disordered. Xin repeat units follow at residues 108–123 (GEVQ…WALD), 143–158 (GDVK…QSVN), 176–191 (GDVH…QPLD), 215–230 (GDVK…QSLD), 255–270 (GDVK…EPLC), 293–308 (NAVR…QPLD), 331–346 (PDVS…QPLD), 368–383 (ADVT…QALD), 402–417 (GDVK…QPME), 439–454 (GDVK…CPLG), 475–490 (GDVK…LPLD), 510–525 (GNVK…TPLY), 548–563 (GDVK…RPLD), 586–601 (GDVR…QPMD), 624–639 (GDVK…QPMH), 658–673 (ADVK…QPLD), 697–712 (VDVK…EPLG), 736–751 (GEVS…KPLD), 769–784 (GSVH…YPMD), 805–820 (GDVG…YSLD), 842–857 (ANVK…QPLY), 880–895 (GDVK…KPLD), 917–932 (GDVQ…EPLD), 951–966 (GDVQ…QQVG), 982–997 (GDVR…QPVD), 1020–1035 (GDVK…QPMD), and 1055–1070 (ADVK…TPLD). A compositionally biased stretch (polar residues) spans 1514–1565 (ASKQETKTLQSTIHQQESASTMRENTSTAIRTSTTRVQEASRTHTSVSQKSI). Disordered stretches follow at residues 1514–1568 (ASKQ…IASH), 1715–1856 (ASGS…PPPA), and 1914–1941 (YKAR…GEVG). Positions 1820 to 1833 (SASTNNSTNRSTKS) are enriched in low complexity. Over residues 1834-1843 (VPPPVPPKPP) the composition is skewed to pro residues.

It belongs to the Xin family. As to expression, expressed at intercalated disks in the heart (at protein level).

It is found in the cell junction. The protein localises to the adherens junction. Its subcellular location is the desmosome. Functionally, involved in cardiac morphogenesis, including heart midline formation, cardiac tubule looping, myocardial formation and maintenance of heart beat speed and rhythm. May protect actin filaments from depolymerization. May play a role in development of normal skeletal muscle morphology, muscle fiber type composition and regulation of muscle satellite cell activation and survival. This Gallus gallus (Chicken) protein is Xin actin-binding repeat-containing protein 1.